Reading from the N-terminus, the 427-residue chain is Zinc-finger homeodomain protein 7 (427 aa).

Disordered regions lie at residues 1 to 60 and 91 to 118; these read MEYK…SLMD and LHAA…QRHH. Positions 10-28 are enriched in acidic residues; it reads EEEEEEEEEEDDEEEDEEE. Over residues 50-60 the composition is skewed to low complexity; sequence SSASSPSSLMD. The segment at 163-211 adopts a ZF-HD dimerization-type; degenerate zinc-finger fold; that stretch reads YRECLKNHAARMGAHVLDGCGEFMSSPGDGAAALACAACGCHRSFHRRE. 2 disordered regions span residues 264-320 and 375-427; these read KRPP…SKKR and HLAK…QHDA. Composition is skewed to low complexity over residues 271-283 and 301-312; these read VSPA…LAES and HAAAVVAASASA. Residues 318–381 constitute a DNA-binding region (homeobox); sequence KKRFRTKFTA…NNKHLAKTPP (64 aa). The segment covering 380–401 has biased composition (pro residues); sequence PPSPTSQPPPPPLHHDPSPPPP. Residues 402–416 are compositionally biased toward basic residues; that stretch reads PHHHHHHHHHHHPPQ. Low complexity predominate over residues 417–427; that stretch reads HHQQQQQQHDA.

Homo- and heterodimer with other ZFHD proteins.

Its subcellular location is the nucleus. Functionally, putative transcription factor. The chain is Zinc-finger homeodomain protein 7 (ZHD7) from Oryza sativa subsp. japonica (Rice).